We begin with the raw amino-acid sequence, 1123 residues long: RNA-binding protein 6 (1123 aa).

2 disordered regions span residues 1–391 (MWGD…EGGL) and 413–454 (LPGS…EEKP). Serine 17 carries the phosphoserine modification. Lysine 36 participates in a covalent cross-link: Glycyl lysine isopeptide (Lys-Gly) (interchain with G-Cter in SUMO2). Positions 79–97 (DGPHGDYRGGEGPGHDFRG) are enriched in basic and acidic residues. Over residues 98 to 114 (GDFSSSDFQSRDSSQLD) the composition is skewed to low complexity. Composition is skewed to basic and acidic residues over residues 115 to 131 (FRGRDIHSGDFRDREGP) and 145 to 237 (YRGR…DFRG). At serine 240 the chain carries Phosphoserine. Basic and acidic residues-rich tracts occupy residues 245–286 (LDFR…REMP) and 301–323 (QDREHSGMNVNRREESTHDHTIE). A Glycyl lysine isopeptide (Lys-Gly) (interchain with G-Cter in SUMO2) cross-link involves residue lysine 331. Residues 332–354 (GEFEHSETREGETQGVAFEHESP) show a composition bias toward basic and acidic residues. Phosphothreonine is present on threonine 344. Over residues 356–365 (DFQNSQSPVQ) the composition is skewed to polar residues. Phosphoserine occurs at positions 360 and 362. Basic and acidic residues-rich tracts occupy residues 366–391 (DQDKSQLSGREEQSSDAGLFKEEGGL) and 431–454 (KTARDAQRDLQDQDYRTGPSEEKP). Residues lysine 386, lysine 453, lysine 469, and lysine 569 each participate in a glycyl lysine isopeptide (Lys-Gly) (interchain with G-Cter in SUMO2) cross-link. Positions 456–536 (RLIRLSGVPE…KEVTLEYVSS (81 aa)) constitute an RRM domain. 3 disordered regions span residues 574–654 (TYPQ…QDGE), 741–787 (KRRN…QSSS), and 827–948 (EEEI…EEDK). 2 stretches are compositionally biased toward basic and acidic residues: residues 597–654 (PADK…QDGE) and 742–754 (RRNDSGDHSDHMH). The segment covering 772 to 787 (SDWSSDTNRQGQQSSS) has biased composition (polar residues). Basic and acidic residues predominate over residues 843-860 (SKKEMSKRDGKEKKDRGV). Glycyl lysine isopeptide (Lys-Gly) (interchain with G-Cter in SUMO2) cross-links involve residues lysine 871, lysine 879, and lysine 887. Serine 891 carries the phosphoserine modification. Over residues 910-922 (GDSDYEEEEEEEQ) the composition is skewed to acidic residues. Residues 934–948 (QKREEQTKKENEEDK) show a composition bias toward basic and acidic residues. Residues lysine 935, lysine 948, lysine 991, and lysine 1019 each participate in a glycyl lysine isopeptide (Lys-Gly) (interchain with G-Cter in SUMO2) cross-link. Residues 1004–1051 (EREGKFKGRGNDRREKLQSFDSPERKRIKYSRETDSDRKLVDKEDIDT) are compositionally biased toward basic and acidic residues. The disordered stretch occupies residues 1004–1106 (EREGKFKGRG…RTSKRQSNET (103 aa)). Phosphoserine is present on residues serine 1022 and serine 1025. Residues lysine 1042, lysine 1046, and lysine 1066 each participate in a glycyl lysine isopeptide (Lys-Gly) (interchain with G-Cter in SUMO2) cross-link. A G-patch domain is found at 1051 to 1097 (TSSKGGCVQQATGWRKGTGLGYGHPGLASSEEAEGRMRGPSVGASGR).

May interact with FAM168B. As to expression, ubiquitous in adults.

It is found in the nucleus. Its function is as follows. Specifically binds poly(G) RNA homopolymers in vitro. The chain is RNA-binding protein 6 (RBM6) from Homo sapiens (Human).